The following is a 137-amino-acid chain: Nucleoside diphosphate kinase (137 aa).

6 residues coordinate ATP: Lys-9, Phe-57, Arg-85, Thr-91, Arg-102, and Asn-112. Catalysis depends on His-115, which acts as the Pros-phosphohistidine intermediate.

The protein belongs to the NDK family. As to quaternary structure, homotetramer. Mg(2+) serves as cofactor.

The protein localises to the cytoplasm. It carries out the reaction a 2'-deoxyribonucleoside 5'-diphosphate + ATP = a 2'-deoxyribonucleoside 5'-triphosphate + ADP. It catalyses the reaction a ribonucleoside 5'-diphosphate + ATP = a ribonucleoside 5'-triphosphate + ADP. Functionally, major role in the synthesis of nucleoside triphosphates other than ATP. The ATP gamma phosphate is transferred to the NDP beta phosphate via a ping-pong mechanism, using a phosphorylated active-site intermediate. The protein is Nucleoside diphosphate kinase of Wolinella succinogenes (strain ATCC 29543 / DSM 1740 / CCUG 13145 / JCM 31913 / LMG 7466 / NCTC 11488 / FDC 602W) (Vibrio succinogenes).